A 637-amino-acid chain; its full sequence is Chaperone protein HtpG (637 aa).

Residues methionine 1–arginine 335 are a; substrate-binding. The b stretch occupies residues glutamate 336–arginine 559. The tract at residues phenylalanine 560–asparagine 637 is c.

It belongs to the heat shock protein 90 family. As to quaternary structure, homodimer.

The protein resides in the cytoplasm. Functionally, molecular chaperone. Has ATPase activity. In Ehrlichia ruminantium (strain Gardel), this protein is Chaperone protein HtpG.